Consider the following 858-residue polypeptide: Bifunctional uridylyltransferase/uridylyl-removing enzyme (858 aa).

The tract at residues 1 to 324 (MSASVAEPPP…PATSGVTRVL (324 aa)) is uridylyltransferase. Positions 325 to 681 (SPGRFVEKQG…ARPSPVGDAL (357 aa)) are uridylyl-removing. The 123-residue stretch at 443-565 (VDQHILMVLR…VGSERRLTAL (123 aa)) folds into the HD domain. 2 consecutive ACT domains span residues 682-761 (QVLV…PEPS) and 790-858 (ILSV…AIAV).

It belongs to the GlnD family. Requires Mg(2+) as cofactor.

It carries out the reaction [protein-PII]-L-tyrosine + UTP = [protein-PII]-uridylyl-L-tyrosine + diphosphate. The enzyme catalyses [protein-PII]-uridylyl-L-tyrosine + H2O = [protein-PII]-L-tyrosine + UMP + H(+). With respect to regulation, uridylyltransferase (UTase) activity is inhibited by glutamine, while glutamine activates uridylyl-removing (UR) activity. In terms of biological role, modifies, by uridylylation and deuridylylation, the PII regulatory proteins (GlnB and homologs), in response to the nitrogen status of the cell that GlnD senses through the glutamine level. Under low glutamine levels, catalyzes the conversion of the PII proteins and UTP to PII-UMP and PPi, while under higher glutamine levels, GlnD hydrolyzes PII-UMP to PII and UMP (deuridylylation). Thus, controls uridylylation state and activity of the PII proteins, and plays an important role in the regulation of nitrogen assimilation and metabolism. The sequence is that of Bifunctional uridylyltransferase/uridylyl-removing enzyme from Burkholderia mallei (strain ATCC 23344).